The sequence spans 119 residues: Phosphoribosyl-AMP cyclohydrolase (119 aa).

Asp77 contributes to the Mg(2+) binding site. Residue Cys78 participates in Zn(2+) binding. Asp79 and Asp81 together coordinate Mg(2+). Cys94 and Cys101 together coordinate Zn(2+).

Belongs to the PRA-CH family. As to quaternary structure, homodimer. It depends on Mg(2+) as a cofactor. Zn(2+) serves as cofactor.

It localises to the cytoplasm. The catalysed reaction is 1-(5-phospho-beta-D-ribosyl)-5'-AMP + H2O = 1-(5-phospho-beta-D-ribosyl)-5-[(5-phospho-beta-D-ribosylamino)methylideneamino]imidazole-4-carboxamide. The protein operates within amino-acid biosynthesis; L-histidine biosynthesis; L-histidine from 5-phospho-alpha-D-ribose 1-diphosphate: step 3/9. Functionally, catalyzes the hydrolysis of the adenine ring of phosphoribosyl-AMP. This is Phosphoribosyl-AMP cyclohydrolase from Cereibacter sphaeroides (strain ATCC 17023 / DSM 158 / JCM 6121 / CCUG 31486 / LMG 2827 / NBRC 12203 / NCIMB 8253 / ATH 2.4.1.) (Rhodobacter sphaeroides).